Reading from the N-terminus, the 893-residue chain is DNA mismatch repair protein MutS (893 aa).

An ATP-binding site is contributed by 637–644; that stretch reads GPNMGGKS.

It belongs to the DNA mismatch repair MutS family.

This protein is involved in the repair of mismatches in DNA. It is possible that it carries out the mismatch recognition step. This protein has a weak ATPase activity. This is DNA mismatch repair protein MutS from Burkholderia thailandensis (strain ATCC 700388 / DSM 13276 / CCUG 48851 / CIP 106301 / E264).